A 629-amino-acid polypeptide reads, in one-letter code: UvrABC system protein C (629 aa).

Positions 26–105 constitute a GIY-YIG domain; the sequence is TSPGIYQFKN…IKELKPRYNV (80 aa). Positions 219 to 254 constitute a UVR domain; that stretch reads SALIRSLTENMHLAATELRFEQAAEIKAQIESLKRY.

It belongs to the UvrC family. Interacts with UvrB in an incision complex.

It localises to the cytoplasm. The UvrABC repair system catalyzes the recognition and processing of DNA lesions. UvrC both incises the 5' and 3' sides of the lesion. The N-terminal half is responsible for the 3' incision and the C-terminal half is responsible for the 5' incision. The protein is UvrABC system protein C of Chlorobium chlorochromatii (strain CaD3).